A 521-amino-acid chain; its full sequence is Cytochrome P450 monooxygenase gloO (521 aa).

The signal sequence occupies residues 1 to 26 (MIAALFTTNLQLGAVGVFIFALLAFA). Cys464 is a heme binding site.

The protein belongs to the cytochrome P450 family. The cofactor is heme.

It participates in mycotoxin biosynthesis. Its function is as follows. Cytochrome P450 monooxygenase; part of the gene cluster that mediates the biosynthesis of pneumocandins, lipohexapeptides of the echinocandin family that prevent fungal cell wall formation by non-competitive inhibition of beta-1,3-glucan synthase. The 10,12-dimethylmyristoyl side chain is synthesized by the reducing polyketide synthase gloL/GLPKS4. The thioesterase gloN/GLHYD exclusively interacts with gloL/GLPKS4 to maintain turnover of the polyketide side chain. The 10R,12S-dimethylmyristic acid is then transferred to the first thiolation domain of the nonribosomal peptide synthetase gloA/GLNRPS4 by the acyl-AMP ligase gloD/GLligase, followed by its acylation to L-ornithine to trigger elongation of the cyclic hexapeptide. L-ornithine, 4R-hydroxyl-L-proline (generated from L-proline by the dioxygenase gloF/GLOXY2), 3S-hydroxyl-L-homotyrosine (generated by gloG/GLHtyB, gloH/GLHtyA, gloI/GLHtyC, gloJ/GLHtyD and hydroxylated at C-3 by the dioxygenase gloM/GLOXY1), 3R-hydroxyl-L-glutamine (generated from L-glutamine probably by the dioxygenase gloE/GLOXY3) and 3S-hydroxyl-L-proline (generated from L-proline by the dioxygenase gloF/GLOXY2 to yield pneumocandin B0), or 3S-hydroxyl-4S-methyl-L-proline (generated from L-leucine by the dioxygenase gloC/GLOXY4 to yield pneumocandin A0) are sequentially added to the growing chain. The last C domain of gloA/GLNRPS4 is proposed to be responsible for cyclization by condensation to form the peptide bond between L-ornithine and 3S-hydroxyl-4S-methyl-L-proline (for pneumocandin A0) or 3S-hydroxyl-L-proline (for pneumocandin B0). Finally, the subsequent C-4 hydroxylation of 3S-hydroxyl-L-homotyrosine and L-ornithine dihydroxylation at C-4 and C-5 are performed by the cytochrome P450 monooxygenases gloP/GLP450-1 and gloO/GLP450-2, respectively. The sequence is that of Cytochrome P450 monooxygenase gloO from Glarea lozoyensis (strain ATCC 20868 / MF5171).